A 525-amino-acid polypeptide reads, in one-letter code: GMP synthase [glutamine-hydrolyzing] (525 aa).

Positions 9–207 (RILILDFGSQ…VRDICQCEAL (199 aa)) constitute a Glutamine amidotransferase type-1 domain. Cysteine 86 (nucleophile) is an active-site residue. Residues histidine 181 and glutamate 183 contribute to the active site. The GMPS ATP-PPase domain occupies 208 to 400 (WTPAKIIDDA…LGLPYDMLYR (193 aa)). ATP is bound at residue 235–241 (SGGVDSS).

In terms of assembly, homodimer.

It carries out the reaction XMP + L-glutamine + ATP + H2O = GMP + L-glutamate + AMP + diphosphate + 2 H(+). It participates in purine metabolism; GMP biosynthesis; GMP from XMP (L-Gln route): step 1/1. Its function is as follows. Catalyzes the synthesis of GMP from XMP. This Salmonella arizonae (strain ATCC BAA-731 / CDC346-86 / RSK2980) protein is GMP synthase [glutamine-hydrolyzing].